We begin with the raw amino-acid sequence, 464 residues long: F-box/WD repeat-containing protein 12 (464 aa).

An F-box domain is found at 1-45 (MEIRLPDLALKRIFSFLDLFGLLQVSQVNKHWNRIADSDYLWRSL). WD repeat units follow at residues 89-132 (YKVT…CAWD), 136-174 (GTMI…KVWN), 178-217 (RDAL…YTFT), 222-263 (RDVS…FLTE), 270-315 (EGSV…ITFD), 320-367 (KTGG…LLFS), 370-407 (GFLL…YMWE), and 416-461 (RSCC…VMYS).

In terms of assembly, interacts with SKP1. Interacts with CUL1. Interacts with IL22RA1. As to expression, ubiquitously expressed.

It participates in protein modification; protein ubiquitination. Substrate-recognition component of the SCF (SKP1-CUL1-F-box protein)-type E3 ubiquitin ligase complex. Promotes degradation of interleukin-22 receptor subunit IL22RA1 in resting and IL22-stimulated conditions by facilitating its ubiquitination. Functions as a cell growth suppressor. The sequence is that of F-box/WD repeat-containing protein 12 (FBXW12) from Homo sapiens (Human).